A 265-amino-acid chain; its full sequence is Cytochrome b-c1 complex subunit Rieske, mitochondrial (265 aa).

Residues 1–53 (MLRVAGRRLSSSAARSSSTFFTRSSFTVTDDSSPARSPSPSLTSSFLDQIRGF) constitute a mitochondrion transit peptide. The Mitochondrial matrix segment spans residues 54–102 (SSNSVSPAHQLGLVSDLPATVAAIKNPSSKIVYDDSNHERYPPGDPSKR). A helical membrane pass occupies residues 103–125 (AFAYFVLTGGRFVYASSVRLLIL). The Mitochondrial intermembrane portion of the chain corresponds to 126–265 (KFVLSMSASK…FLEENKLLIG (140 aa)). In terms of domain architecture, Rieske spans 175–263 (IKLANSVDLG…YSFLEENKLL (89 aa)). [2Fe-2S] cluster-binding residues include C208, H210, C227, and H230. C213 and C229 form a disulfide bridge.

The protein belongs to the Rieske iron-sulfur protein family. Component of the ubiquinol-cytochrome c oxidoreductase (cytochrome b-c1 complex, complex III, CIII), a multisubunit enzyme composed of 3 respiratory subunits cytochrome b, cytochrome c1 and Rieske protein, 2 core protein subunits, and several low-molecular weight protein subunits. The complex exists as an obligatory dimer and forms supercomplexes (SCs) in the inner mitochondrial membrane with cytochrome c oxidase (complex IV, CIV). The cofactor is [2Fe-2S] cluster.

The protein localises to the mitochondrion inner membrane. The enzyme catalyses a quinol + 2 Fe(III)-[cytochrome c](out) = a quinone + 2 Fe(II)-[cytochrome c](out) + 2 H(+)(out). Component of the ubiquinol-cytochrome c oxidoreductase, a multisubunit transmembrane complex that is part of the mitochondrial electron transport chain which drives oxidative phosphorylation. The respiratory chain contains 3 multisubunit complexes succinate dehydrogenase (complex II, CII), ubiquinol-cytochrome c oxidoreductase (cytochrome b-c1 complex, complex III, CIII) and cytochrome c oxidase (complex IV, CIV), that cooperate to transfer electrons derived from NADH and succinate to molecular oxygen, creating an electrochemical gradient over the inner membrane that drives transmembrane transport and the ATP synthase. The cytochrome b-c1 complex catalyzes electron transfer from ubiquinol to cytochrome c, linking this redox reaction to translocation of protons across the mitochondrial inner membrane, with protons being carried across the membrane as hydrogens on the quinol. In the process called Q cycle, 2 protons are consumed from the matrix, 4 protons are released into the intermembrane space and 2 electrons are passed to cytochrome c. The Rieske protein is a catalytic core subunit containing a [2Fe-2S] iron-sulfur cluster. It cycles between 2 conformational states during catalysis to transfer electrons from the quinol bound in the Q(0) site in cytochrome b to cytochrome c1. This is Cytochrome b-c1 complex subunit Rieske, mitochondrial (FES1) from Solanum tuberosum (Potato).